Reading from the N-terminus, the 394-residue chain is Flap endonuclease 1 (394 aa).

An N-domain region spans residues 1–104; it reads MGIKQLFSII…GELAKRFQRK (104 aa). A Mg(2+)-binding site is contributed by Asp34. Arg47 and Arg70 together coordinate DNA. Residues Asp86, Glu158, Glu160, Asp179, and Asp181 each coordinate Mg(2+). The interval 122–253 is I-domain; the sequence is DVEKFSRRTV…STALKLIREH (132 aa). Residue Glu158 coordinates DNA. Residues Gly231 and Asp233 each coordinate DNA. Asp233 contacts Mg(2+). Residues 341–349 form an interaction with PCNA region; it reads QQARIEGFF. Residues 356–383 are compositionally biased toward basic and acidic residues; that stretch reads EEEKKAHKRKLEEQAEQKRKKVKEEKKE. A disordered region spans residues 356–394; it reads EEEKKAHKRKLEEQAEQKRKKVKEEKKEKAKLKAKPRGA. Positions 384–394 are enriched in basic residues; that stretch reads KAKLKAKPRGA.

Belongs to the XPG/RAD2 endonuclease family. FEN1 subfamily. Interacts with PCNA. Three molecules of FEN1 bind to one PCNA trimer with each molecule binding to one PCNA monomer. PCNA stimulates the nuclease activity without altering cleavage specificity. Mg(2+) is required as a cofactor. In terms of processing, phosphorylated. Phosphorylation upon DNA damage induces relocalization to the nuclear plasma.

Its subcellular location is the nucleus. The protein resides in the nucleolus. The protein localises to the nucleoplasm. It is found in the mitochondrion. In terms of biological role, structure-specific nuclease with 5'-flap endonuclease and 5'-3' exonuclease activities involved in DNA replication and repair. During DNA replication, cleaves the 5'-overhanging flap structure that is generated by displacement synthesis when DNA polymerase encounters the 5'-end of a downstream Okazaki fragment. It enters the flap from the 5'-end and then tracks to cleave the flap base, leaving a nick for ligation. Also involved in the long patch base excision repair (LP-BER) pathway, by cleaving within the apurinic/apyrimidinic (AP) site-terminated flap. Acts as a genome stabilization factor that prevents flaps from equilibrating into structures that lead to duplications and deletions. Also possesses 5'-3' exonuclease activity on nicked or gapped double-stranded DNA, and exhibits RNase H activity. Also involved in replication and repair of rDNA and in repairing mitochondrial DNA. The chain is Flap endonuclease 1 from Sordaria macrospora (strain ATCC MYA-333 / DSM 997 / K(L3346) / K-hell).